A 377-amino-acid polypeptide reads, in one-letter code: Protein RecA (377 aa).

Residue 82–89 (GPESSGKT) coordinates ATP. A disordered region spans residues 345-377 (EGSEVSANSMRPLASAARQASSRPNLSQVSANG). Positions 362-377 (RQASSRPNLSQVSANG) are enriched in polar residues.

Belongs to the RecA family.

It is found in the cytoplasm. In terms of biological role, can catalyze the hydrolysis of ATP in the presence of single-stranded DNA, the ATP-dependent uptake of single-stranded DNA by duplex DNA, and the ATP-dependent hybridization of homologous single-stranded DNAs. It interacts with LexA causing its activation and leading to its autocatalytic cleavage. The protein is Protein RecA of Prochlorococcus marinus (strain NATL2A).